We begin with the raw amino-acid sequence, 302 residues long: MFEWTWHLEWQTPQEFHAHAIKRILIEERSEFQRVILAELFRFGKALIIDGKIQSTLADEFIYHESLVHPLLISLEDPENILILGGGEGATLREALRYKSVRKVTMVDIDPVVIKFAKQNLQEWHMGSFDDSRTNLIIGDGYKFVKETNEKYNAIILDLTDPIQDSPSQLLYTSEFYRDLKSIITPNGGLVTQATSPSFSLDTFAIIYSTLKTVFKNVSAGITYVPSFDGLWGFIYASDVTNPAHLNRNQINDRIKERVTGSLRFYDGETHEMLFRVPKYIREKIENEKRVSTRENPVATPA.

In terms of domain architecture, PABS spans 4 to 239; it reads WTWHLEWQTP…GLWGFIYASD (236 aa). Gln33 serves as a coordination point for S-methyl-5'-thioadenosine. Spermidine-binding residues include His64 and Glu88. S-methyl-5'-thioadenosine contacts are provided by residues Asp108 and 140–141; that span reads DG. Asp158 acts as the Proton acceptor in catalysis. Pro167 is an S-methyl-5'-thioadenosine binding site.

This sequence belongs to the spermidine/spermine synthase family. As to quaternary structure, homodimer or homotetramer.

Its subcellular location is the cytoplasm. The catalysed reaction is S-adenosyl 3-(methylsulfanyl)propylamine + putrescine = S-methyl-5'-thioadenosine + spermidine + H(+). Its pathway is amine and polyamine biosynthesis; spermidine biosynthesis; spermidine from putrescine: step 1/1. Functionally, catalyzes the irreversible transfer of a propylamine group from the amino donor S-adenosylmethioninamine (decarboxy-AdoMet) to putrescine (1,4-diaminobutane) to yield spermidine. This is Polyamine aminopropyltransferase from Sulfolobus acidocaldarius (strain ATCC 33909 / DSM 639 / JCM 8929 / NBRC 15157 / NCIMB 11770).